Reading from the N-terminus, the 205-residue chain is Urease accessory protein UreG (205 aa).

14 to 21 (GPVGSGKT) serves as a coordination point for GTP.

It belongs to the SIMIBI class G3E GTPase family. UreG subfamily. As to quaternary structure, homodimer. UreD, UreF and UreG form a complex that acts as a GTP-hydrolysis-dependent molecular chaperone, activating the urease apoprotein by helping to assemble the nickel containing metallocenter of UreC. The UreE protein probably delivers the nickel.

Its subcellular location is the cytoplasm. Facilitates the functional incorporation of the urease nickel metallocenter. This process requires GTP hydrolysis, probably effectuated by UreG. The protein is Urease accessory protein UreG of Enterobacter sp. (strain 638).